A 280-amino-acid polypeptide reads, in one-letter code: Apoptosis regulator ced-9 (280 aa).

The segment at 33–59 (GTEPTDFGINSDAQDLPSPSRQASTRR) is disordered. Residues 43–59 (SDAQDLPSPSRQASTRR) show a composition bias toward polar residues. Positions 80–99 (IEGFVVDYFTHRIRQNGMEW) match the BH4 motif. Residues 160-179 (QTDQCPMSYGRLIGLISFGG) carry the BH1 motif. Positions 213–229 (NWKEHNRSWDDFMTLGK) match the BH2 motif.

This sequence belongs to the Bcl-2 family. In terms of assembly, interacts with asymmetric homodimer ced-4; the interaction sequesters ced-4. Interacts with egl-1; the interaction results in ced-4 release. Interacts with dre-1; the interaction inhibits ced-9 activity, either directly or indirectly. Interacts with dct-1. May form a complex composed of ced-9, ced-4 and mac-1. Interacts with dynamin-related protein drp-1 (via residues 280-502); the interaction is enhanced by GTP rather than GDP; the interaction is probably direct and may occur at the mitochondrion. Interaction with drp-1 may be enhanced by interaction of ced-9 with egl-1, but not with ced-4. A ced-9/egl-1 complex may recruit drp-1 to the mitochondrial surface. Interacts with fzo-1; interaction may be suppressed by interaction of ced-9 with egl-1.

The protein localises to the perikaryon. It localises to the synapse. The protein resides in the endomembrane system. It is found in the mitochondrion membrane. Its subcellular location is the cytoplasm. Its function is as follows. Plays a major role in programmed cell death (PCD, apoptosis). egl-1 binds to and directly inhibits the activity of ced-9, releasing the cell death activator ced-4 from a ced-9/ced-4 containing protein complex and allowing ced-4 to activate the cell-killing caspase ced-3. During larval development, required for the elimination of transient presynaptic components downstream of egl-1 and upstream of ced-4 and ced-3 apoptotic pathway. Has been shown in one study to be dispensable in mitochondrial dynamics and morphology during early embryonic development. However, another study shows that a egl-1/ced-9 containing complex may promote drp-1-dependent mitochondrial fission. The chain is Apoptosis regulator ced-9 (ced-9) from Caenorhabditis elegans.